Reading from the N-terminus, the 520-residue chain is Autophagy-related protein 22 (520 aa).

Asparagine 11 is a glycosylation site (N-linked (GlcNAc...) asparagine). 4 consecutive transmembrane segments (helical) span residues 32 to 52 (IVGWYFYSFSSEPFVVSAIAT), 104 to 124 (FSVSVFFQTLVVITVSGVVDI), 133 to 153 (NVLLLFGIIGALSTILISRIY), and 158 to 178 (YMLAFLCILSNSCYGVVNVVG). An N-linked (GlcNAc...) asparagine glycan is attached at asparagine 193. 2 helical membrane passes run 214–234 (GASIGYSSALVVQIISIFLIK) and 244–264 (VATLFVGIWWLIWQLPMSWLL). Asparagine 280 carries N-linked (GlcNAc...) asparagine glycosylation. Helical transmembrane passes span 316-336 (VVIFLVGWFIVSDSVTTINST), 350-370 (LSLIVLSILTMINAILGAFTI), 386-406 (LIYIILWASFIPFYGILGFVF), 415-435 (FEMFITAIWYGISLGGLSAVS), 454-474 (IFNVTDKGSSILGPLLIGLIT), and 483-503 (SFFLLFALLILAIPIFHLLDV).

The protein belongs to the ATG22 family.

The protein localises to the vacuole membrane. In terms of biological role, vacuolar effluxer which mediate the efflux of amino acids resulting from autophagic degradation. The release of autophagic amino acids allows the maintenance of protein synthesis and viability during nitrogen starvation. The sequence is that of Autophagy-related protein 22 (ATG22) from Vanderwaltozyma polyspora (strain ATCC 22028 / DSM 70294 / BCRC 21397 / CBS 2163 / NBRC 10782 / NRRL Y-8283 / UCD 57-17) (Kluyveromyces polysporus).